Reading from the N-terminus, the 302-residue chain is Late embryogenesis abundant protein D-29 (302 aa).

Disordered stretches follow at residues His25–Tyr93, Val168–Ser193, and Ala205–Asn302. Composition is skewed to basic and acidic residues over residues Arg34–Asn70 and Ala79–Tyr93. Basic and acidic residues predominate over residues Ala205–Lys286.

It belongs to the LEA type 1 family.

LEA protein are late embryonic proteins abundant in higher plant seed embryos. There are two subsets of LEA proteins (5a and 5b), the first ones are expressed when the cotyledon weight reach 80 mg and the second set are expressed above 100 mg. The function of those proteins is not known. This chain is Late embryogenesis abundant protein D-29, found in Gossypium hirsutum (Upland cotton).